The chain runs to 363 residues: Phosphate acyltransferase (363 aa).

Residues 326–363 (ADSHPSKVNAGENAPPLASASNPSPEALPVGSLDRVEG) are disordered. Positions 337 to 354 (ENAPPLASASNPSPEALP) are enriched in low complexity.

The protein belongs to the PlsX family. In terms of assembly, homodimer. Probably interacts with PlsY.

It localises to the cytoplasm. It carries out the reaction a fatty acyl-[ACP] + phosphate = an acyl phosphate + holo-[ACP]. Its pathway is lipid metabolism; phospholipid metabolism. Functionally, catalyzes the reversible formation of acyl-phosphate (acyl-PO(4)) from acyl-[acyl-carrier-protein] (acyl-ACP). This enzyme utilizes acyl-ACP as fatty acyl donor, but not acyl-CoA. In Synechococcus sp. (strain JA-3-3Ab) (Cyanobacteria bacterium Yellowstone A-Prime), this protein is Phosphate acyltransferase.